Consider the following 1046-residue polypeptide: SWI/SNF-related matrix-associated actin-dependent regulator of chromatin subfamily A member 1 (1046 aa).

The segment at 27–61 (EQPGPSTFKEEGAAAAATEGTTATEKGEKKEKITS) is disordered. A compositionally biased stretch (low complexity) spans 39–50 (AAAAATEGTTAT). Phosphoserine is present on residues Ser120 and Ser123. A Helicase ATP-binding domain is found at 199-364 (ISLYENGVNG…WALLNFLLPD (166 aa)). 212–219 (DEMGLGKT) serves as a coordination point for ATP. The DEAH box motif lies at 315 to 318 (DEAH). Positions 494–645 (ALDKLLARIK…SIVIQQGRLI (152 aa)) constitute a Helicase C-terminal domain. Residues Lys654, Lys720, and Lys742 each participate in a glycyl lysine isopeptide (Lys-Gly) (interchain with G-Cter in SUMO2) cross-link. Residues 819–840 (AQREEQKKIDGAEPLTPQETEE) are disordered. The span at 820 to 829 (QREEQKKIDG) shows a compositional bias: basic and acidic residues. The SANT 1 domain occupies 847–899 (QGFTNWTKRDFNQFIKANEKYGRDDIDNIAREVEGKSPEEVMEYSAVFWERCN). Tyr946 is subject to Phosphotyrosine. An SANT 2 domain is found at 950-1014 (KGKNYTEEED…QRRCNTLISL (65 aa)). Residues 1003–1037 (EFQRRCNTLISLIEKENMEIEERERAEKKKRATKT) adopt a coiled-coil conformation. The interval 1025–1046 (RERAEKKKRATKTPMVKFSAFS) is disordered.

It belongs to the SNF2/RAD54 helicase family. ISWI subfamily. As to quaternary structure, may form homodimers. Component of the ACF-1 ISWI chromatin remodeling complex at least composed of SMARCA1 and BAZ1A, which regulates the spacing of histone octamers on the DNA template to facilitate access to DNA. Within the complex interacts with BAZ1A; the interaction is direct. Component of the WICH-1 ISWI chromatin remodeling complex at least composed of SMARCA1 and BAZ1B/WSTF. Within the complex interacts with BAZ1B/WSTF. Component of the NoRC-1 ISWI chromatin remodeling complex at least composed of SMARCA1 and BAZ2A/TIP5. Within the complex interacts with BAZ2A/TIP5. Component of the BRF-1 ISWI chromatin remodeling complex at least composed of SMARCA1 and BAZ2B. Within the complex interacts with BAZ2B. Component of the NURF-1 ISWI chromatin remodeling complex (also called the nucleosome-remodeling factor (NURF) complex) at least composed of SMARCA1, BPTF, RBBP4 and RBBP7. Within the complex interacts with BPTF. Within the complex interacts with RBBP4 and RBBP7. Component of the CERF-1 ISWI chromatin remodeling complex (also called the CECR2-containing-remodeling factor (CERF) complex) at least composed of CECR2 and SMARCA1. LUZP1 is detected as part of the CERF-1 complex in embryonic stem cells where it is involved in complex stabilization but is not detected in the complex in the testis. Component of the RSF-1 ISWI chromatin remodeling complex at least composed of SMARCA1 and RSF1. Within the complex interacts with RSF1. Interacts with PRLR. Interacts with ERCC6. Predominantly expressed in cortex, cerebellum, ovaries, testes, uterus and placenta.

The protein localises to the nucleus. It carries out the reaction ATP + H2O = ADP + phosphate + H(+). Functionally, ATPase that possesses intrinsic ATP-dependent chromatin-remodeling activity. ATPase activity is substrate-dependent, and is increased when nucleosomes are the substrate, but is also catalytically active when DNA alone is the substrate. Catalytic subunit of ISWI chromatin-remodeling complexes, which form ordered nucleosome arrays on chromatin and facilitate access to DNA during DNA-templated processes such as DNA replication, transcription, and repair. Within the ISWI chromatin-remodeling complexes, slides edge- and center-positioned histone octamers away from their original location on the DNA template. Catalytic activity and histone octamer sliding propensity is regulated and determined by components of the ISWI chromatin-remodeling complexes. The BAZ1A-, BAZ1B-, BAZ2A- and BAZ2B-containing ISWI chromatin-remodeling complexes regulate the spacing of nucleosomes along the chromatin and have the ability to slide mononucleosomes to the center of a DNA template. The CECR2- and RSF1-containing ISWI chromatin-remodeling complexes do not have the ability to slide mononucleosomes to the center of a DNA template. Within the NURF-1 and CERF-1 ISWI chromatin remodeling complexes, nucleosomes are the preferred substrate for its ATPase activity. Within the NURF-1 ISWI chromatin-remodeling complex, binds to the promoters of En1 and En2 to positively regulate their expression and promote brain development. May promote neurite outgrowth. May be involved in the development of luteal cells. Facilitates nucleosome assembly during DNA replication, ensuring replication fork progression and genomic stability by preventing replication stress and nascent DNA gaps. The chain is SWI/SNF-related matrix-associated actin-dependent regulator of chromatin subfamily A member 1 (Smarca1) from Mus musculus (Mouse).